Here is a 319-residue protein sequence, read N- to C-terminus: Extracellular phospholipase A1 (319 aa).

The signal sequence occupies residues Met-1–Ala-24.

It catalyses the reaction a 1,2-diacyl-sn-glycero-3-phosphocholine + H2O = a 2-acyl-sn-glycero-3-phosphocholine + a fatty acid + H(+). In Serratia liquefaciens, this protein is Extracellular phospholipase A1 (phlA).